Reading from the N-terminus, the 202-residue chain is Large ribosomal subunit protein bL25 (202 aa).

The disordered stretch occupies residues 182–202 (EVEAEETEDDEAASEGEEAAE). Residues 183-202 (VEAEETEDDEAASEGEEAAE) are compositionally biased toward acidic residues.

Belongs to the bacterial ribosomal protein bL25 family. CTC subfamily. As to quaternary structure, part of the 50S ribosomal subunit; part of the 5S rRNA/L5/L18/L25 subcomplex. Contacts the 5S rRNA. Binds to the 5S rRNA independently of L5 and L18.

In terms of biological role, this is one of the proteins that binds to the 5S RNA in the ribosome where it forms part of the central protuberance. This Corynebacterium glutamicum (strain R) protein is Large ribosomal subunit protein bL25.